The chain runs to 436 residues: tRNA (guanine(37)-N(1))-methyltransferase 1 (436 aa).

Residues His-229, 277-278 (DL), and Asn-325 contribute to the S-adenosyl-L-methionine site.

Belongs to the class I-like SAM-binding methyltransferase superfamily. TRM5/TYW2 family. As to quaternary structure, monomer.

It localises to the mitochondrion matrix. Its subcellular location is the nucleus. It is found in the cytoplasm. The enzyme catalyses guanosine(37) in tRNA + S-adenosyl-L-methionine = N(1)-methylguanosine(37) in tRNA + S-adenosyl-L-homocysteine + H(+). Specifically methylates the N1 position of guanosine-37 in various cytoplasmic and mitochondrial tRNAs. Methylation is not dependent on the nature of the nucleoside 5' of the target nucleoside. This is the first step in the biosynthesis of wybutosine (yW), a modified base adjacent to the anticodon of tRNAs and required for accurate decoding. The protein is tRNA (guanine(37)-N(1))-methyltransferase 1 of Phaeodactylum tricornutum (strain CCAP 1055/1).